The sequence spans 307 residues: Pseudouridine-5'-phosphate glycosidase (307 aa).

Glu-28 acts as the Proton donor in catalysis. Lys-89 and Val-109 together coordinate substrate. Asp-141 contributes to the Mn(2+) binding site. Residue 143–145 (SAD) coordinates substrate. The Nucleophile role is filled by Lys-162.

It belongs to the pseudouridine-5'-phosphate glycosidase family. As to quaternary structure, homotrimer. Mn(2+) is required as a cofactor.

The catalysed reaction is D-ribose 5-phosphate + uracil = psi-UMP + H2O. Catalyzes the reversible cleavage of pseudouridine 5'-phosphate (PsiMP) to ribose 5-phosphate and uracil. Functions biologically in the cleavage direction, as part of a pseudouridine degradation pathway. The sequence is that of Pseudouridine-5'-phosphate glycosidase from Nocardioides sp. (strain ATCC BAA-499 / JS614).